We begin with the raw amino-acid sequence, 1122 residues long: Transcription-repair-coupling factor (1122 aa).

The Helicase ATP-binding domain maps to 593-758 (DLRNGMLMDR…MTGLKELSII (166 aa)). 606 to 613 (GDVGFGKT) lines the ATP pocket. Positions 711–714 (DEEQ) match the DEEQ box motif. Residues 779–933 (IIRDALLREH…GFTIASRDMD (155 aa)) enclose the Helicase C-terminal domain.

In the N-terminal section; belongs to the UvrB family. This sequence in the C-terminal section; belongs to the helicase family. RecG subfamily.

It is found in the cytoplasm. In terms of biological role, couples transcription and DNA repair by recognizing RNA polymerase (RNAP) stalled at DNA lesions. Mediates ATP-dependent release of RNAP and its truncated transcript from the DNA, and recruitment of nucleotide excision repair machinery to the damaged site. The polypeptide is Transcription-repair-coupling factor (Rickettsia conorii (strain ATCC VR-613 / Malish 7)).